Reading from the N-terminus, the 296-residue chain is Ribosomal RNA small subunit methyltransferase H (296 aa).

Residues 30–32 (GGH), Asp-49, Phe-76, Asp-97, and Gln-104 each bind S-adenosyl-L-methionine.

Belongs to the methyltransferase superfamily. RsmH family.

The protein localises to the cytoplasm. It catalyses the reaction cytidine(1402) in 16S rRNA + S-adenosyl-L-methionine = N(4)-methylcytidine(1402) in 16S rRNA + S-adenosyl-L-homocysteine + H(+). Functionally, specifically methylates the N4 position of cytidine in position 1402 (C1402) of 16S rRNA. The chain is Ribosomal RNA small subunit methyltransferase H from Mesomycoplasma hyopneumoniae (strain 232) (Mycoplasma hyopneumoniae).